The chain runs to 502 residues: L-arabinose isomerase (502 aa).

Mn(2+) is bound by residues E307, E334, H351, and H450.

The protein belongs to the arabinose isomerase family. Mn(2+) serves as cofactor.

The enzyme catalyses beta-L-arabinopyranose = L-ribulose. The protein operates within carbohydrate degradation; L-arabinose degradation via L-ribulose; D-xylulose 5-phosphate from L-arabinose (bacterial route): step 1/3. Catalyzes the conversion of L-arabinose to L-ribulose. This chain is L-arabinose isomerase, found in Nocardioides sp. (strain ATCC BAA-499 / JS614).